A 563-amino-acid polypeptide reads, in one-letter code: Arginine--tRNA ligase (563 aa).

A 'HIGH' region motif is present at residues P121 to H131.

Belongs to the class-I aminoacyl-tRNA synthetase family. Monomer.

The protein resides in the cytoplasm. The enzyme catalyses tRNA(Arg) + L-arginine + ATP = L-arginyl-tRNA(Arg) + AMP + diphosphate. In Streptococcus pyogenes serotype M3 (strain ATCC BAA-595 / MGAS315), this protein is Arginine--tRNA ligase.